The following is a 473-amino-acid chain: Phenolic acid decarboxylase (473 aa).

Mn(2+)-binding residues include Asn160, His182, and Glu224. Prenylated FMN-binding positions include 160–165 (NVGIYR) and 181–182 (QH). The active-site Proton donor is the Glu273.

The protein belongs to the UbiD family. YclC subfamily. Prenylated FMN serves as cofactor. The cofactor is Mn(2+).

It carries out the reaction 4-hydroxybenzoate + H(+) = phenol + CO2. The enzyme catalyses vanillate + H(+) = guaiacol + CO2. Its function is as follows. Involved in the non-oxidative decarboxylation and detoxification of phenolic derivatives under both aerobic and anaerobic conditions. Phenolic acid decarboxylase that catalyzes the reversible decarboxylation of 4-hydroxybenzoate and vanillate. Could also catalyze the decarboxylation of salicylate. Is not active on di- and tri-hydroxybenzoate derivatives. The chain is Phenolic acid decarboxylase from Bacillus subtilis (strain 168).